Here is a 102-residue protein sequence, read N- to C-terminus: Small ribosomal subunit protein uS10 (102 aa).

This sequence belongs to the universal ribosomal protein uS10 family. As to quaternary structure, part of the 30S ribosomal subunit.

Its function is as follows. Involved in the binding of tRNA to the ribosomes. This Rhodopseudomonas palustris (strain BisB18) protein is Small ribosomal subunit protein uS10.